We begin with the raw amino-acid sequence, 220 residues long: Chaperone protein TorD (220 aa).

The protein belongs to the TorD/DmsD family. TorD subfamily.

Its subcellular location is the cytoplasm. Involved in the biogenesis of TorA. Acts on TorA before the insertion of the molybdenum cofactor and, as a result, probably favors a conformation of the apoenzyme that is competent for acquiring the cofactor. The polypeptide is Chaperone protein TorD (Vibrio cholerae serotype O1 (strain M66-2)).